Reading from the N-terminus, the 203-residue chain is Linker for activation of T-cells family member 2 (203 aa).

Residues 1 to 6 are Extracellular-facing; sequence MSAELE. The chain crosses the membrane as a helical; Signal-anchor for type III membrane protein span at residues 7-27; sequence LLWPVSGLLLLLLGATAWLCV. S-palmitoyl cysteine attachment occurs at residues cysteine 26 and cysteine 29. At 28 to 203 the chain is on the cytoplasmic side; the sequence is HCSRPGVKRN…NGDVAAAENI (176 aa). Tyrosine 59 is modified (phosphotyrosine). Phosphoserine is present on residues serine 60 and serine 95. Phosphotyrosine is present on residues tyrosine 139, tyrosine 160, and tyrosine 192. Positions 171-203 are disordered; that stretch reads ESKRTMGAPMSLSGSPDEEPDYVNGDVAAAENI.

In terms of assembly, when phosphorylated, interacts with GRB2. May also interact with SOS1, GAB1 and CBL. In terms of processing, phosphorylated on tyrosines following cross-linking of BCR in B-cells, high affinity IgG receptor (FCGR1) in myeloid cells, or high affinity IgE receptor (FCER1) in mast cells; which induces the recruitment of GRB2. As to expression, strongly expressed in testis. Expressed in heart, spleen and lung. Present in B-cells and mast cells (at protein level).

It is found in the cell membrane. Functionally, involved in FCER1 (high affinity immunoglobulin epsilon receptor)-mediated signaling in mast cells. May also be involved in BCR (B-cell antigen receptor)-mediated signaling in B-cells and FCGR1 (high affinity immunoglobulin gamma Fc receptor I)-mediated signaling in myeloid cells. Couples activation of these receptors and their associated kinases with distal intracellular events through the recruitment of GRB2. This chain is Linker for activation of T-cells family member 2 (Lat2), found in Mus musculus (Mouse).